A 669-amino-acid chain; its full sequence is DNA ligase (669 aa).

Residues 35 to 39 (DSEYD), 84 to 85 (SL), and Glu114 contribute to the NAD(+) site. Lys116 (N6-AMP-lysine intermediate) is an active-site residue. 4 residues coordinate NAD(+): Arg137, Glu171, Lys287, and Lys311. Residues Cys405, Cys408, Cys423, and Cys428 each coordinate Zn(2+). The BRCT domain occupies 591 to 669 (DSDSYFAGKT…EAQLLGELKK (79 aa)).

This sequence belongs to the NAD-dependent DNA ligase family. LigA subfamily. Requires Mg(2+) as cofactor. It depends on Mn(2+) as a cofactor.

It catalyses the reaction NAD(+) + (deoxyribonucleotide)n-3'-hydroxyl + 5'-phospho-(deoxyribonucleotide)m = (deoxyribonucleotide)n+m + AMP + beta-nicotinamide D-nucleotide.. Functionally, DNA ligase that catalyzes the formation of phosphodiester linkages between 5'-phosphoryl and 3'-hydroxyl groups in double-stranded DNA using NAD as a coenzyme and as the energy source for the reaction. It is essential for DNA replication and repair of damaged DNA. The sequence is that of DNA ligase from Bacillus velezensis (strain DSM 23117 / BGSC 10A6 / LMG 26770 / FZB42) (Bacillus amyloliquefaciens subsp. plantarum).